Here is a 318-residue protein sequence, read N- to C-terminus: uncharacterized protein (318 aa).

This sequence belongs to the NAD(P)-dependent epimerase/dehydratase family.

This is an uncharacterized protein from Staphylococcus haemolyticus (strain JCSC1435).